The following is a 37-amino-acid chain: Large ribosomal subunit protein bL36 (37 aa).

It belongs to the bacterial ribosomal protein bL36 family.

In Oleidesulfovibrio alaskensis (strain ATCC BAA-1058 / DSM 17464 / G20) (Desulfovibrio alaskensis), this protein is Large ribosomal subunit protein bL36 (rpmJ).